A 521-amino-acid polypeptide reads, in one-letter code: Type-2 serine--tRNA ligase (521 aa).

An L-serine-binding site is contributed by A316. A Zn(2+)-binding site is contributed by C318. Residue R347 coordinates L-serine. ATP contacts are provided by residues 347–349 (RWE) and 358–359 (RV). An L-serine-binding site is contributed by 364–366 (RVE). Zn(2+) contacts are provided by E366 and C473. ATP is bound at residue R480.

This sequence belongs to the class-II aminoacyl-tRNA synthetase family. Type-2 seryl-tRNA synthetase subfamily. As to quaternary structure, homodimer. Requires Zn(2+) as cofactor.

Its subcellular location is the cytoplasm. It carries out the reaction tRNA(Ser) + L-serine + ATP = L-seryl-tRNA(Ser) + AMP + diphosphate + H(+). It catalyses the reaction tRNA(Sec) + L-serine + ATP = L-seryl-tRNA(Sec) + AMP + diphosphate + H(+). Its pathway is aminoacyl-tRNA biosynthesis; selenocysteinyl-tRNA(Sec) biosynthesis; L-seryl-tRNA(Sec) from L-serine and tRNA(Sec): step 1/1. Catalyzes the attachment of serine to tRNA(Ser). Is also able to aminoacylate tRNA(Sec) with serine, to form the misacylated tRNA L-seryl-tRNA(Sec), which will be further converted into selenocysteinyl-tRNA(Sec). This chain is Type-2 serine--tRNA ligase (serS), found in Methanocaldococcus jannaschii (strain ATCC 43067 / DSM 2661 / JAL-1 / JCM 10045 / NBRC 100440) (Methanococcus jannaschii).